A 440-amino-acid polypeptide reads, in one-letter code: Xylose isomerase (440 aa).

Catalysis depends on residues His101 and Asp104. The Mg(2+) site is built by Glu232, Glu268, His271, Asp296, Asp307, Asp309, and Asp339.

This sequence belongs to the xylose isomerase family. In terms of assembly, homotetramer. The cofactor is Mg(2+).

The protein localises to the cytoplasm. It catalyses the reaction alpha-D-xylose = alpha-D-xylulofuranose. The chain is Xylose isomerase from Escherichia coli O17:K52:H18 (strain UMN026 / ExPEC).